The primary structure comprises 392 residues: Alpha-(1,3)-fucosyltransferase fut-6 (392 aa).

The Cytoplasmic portion of the chain corresponds to 1 to 12 (MSQIGGATCTWR). A helical; Signal-anchor for type II membrane protein membrane pass occupies residues 13-35 (YLGRFVTLGIYASVALFVWYTLV). Over 36–392 (PTRSKHKDSI…CNNQIASKYL (357 aa)) the chain is Lumenal. A glycan (N-linked (GlcNAc...) asparagine) is linked at Asn158.

The protein belongs to the glycosyltransferase 10 family. It depends on Unlike other alpha-(1,3)-fucosyltransferases, appears not to require a divalent metal cation as cofactor. as a cofactor.

It localises to the golgi apparatus. The protein resides in the golgi stack membrane. It functions in the pathway protein modification; protein glycosylation. With respect to regulation, inhibited by divalent metal cations. In terms of biological role, involved in the fucosylation of N-glycans. Preferentially catalyzes the addition of fucose in alpha 1-3 linkage to the distal GlcNAc residue in N-glycans. Catalyzes the transfer of fucose to Gal-beta-1-4-GlcNAc-alpha-pNP (LN-pNP) and Gal-beta-1-4-GlcNAc-beta-1-3-Gal-beta-1-4-Glc (LNnT). Unlike alpha-(1,3)-fucosyltransferase fut-1, does not transfer fucose to Man-alpha-1-3-(Man-alpha-1-6)-Man-beta-1-4-GlcNAc-beta-1-4-GlcNAc-beta-1-Asn (M3), Man-alpha-1-3-(Man-alpha-1-6)-Man-beta-1-4-GlcNAc-beta-1-4-(Fuc-alpha-1-6)-GlcNAc-beta-1-Asn (M3F6) and GlcNAc-beta-1-2-Man-alpha-1-3-(GlcNAc-beta-1-2-Man-alpha-1-6)-Man-beta-1-4-GlcNAc-beta-1-4(Fuc-alpha-1-6)-GlcNAc-beta-1-Asn (GnM3F6). The polypeptide is Alpha-(1,3)-fucosyltransferase fut-6 (Caenorhabditis elegans).